We begin with the raw amino-acid sequence, 827 residues long: SID1 transmembrane family member 1 (827 aa).

The N-terminal stretch at 1 to 19 (MLDCLRLALLCALPWLLRA) is a signal peptide. Topologically, residues 20-309 (AVPGHQEEPL…SIKESVYVKS (290 aa)) are extracellular. N-linked (GlcNAc...) asparagine glycans are attached at residues Asn-67, Asn-83, Asn-136, and Asn-282. A helical membrane pass occupies residues 310 to 330 (SLFSIFVFLSFYLGCLLVVLV). Over 331–442 (HHVRFQRKSI…DRRIVSKKYK (112 aa)) the chain is Cytoplasmic. A disordered region spans residues 344–409 (FGSSDGSGNM…VEESDFDTMP (66 aa)). The span at 375 to 386 (SSSSPGRQMSSS) shows a compositional bias: low complexity. Positions 398–409 (SSVEESDFDTMP) are enriched in acidic residues. Residues 443-463 (IYFWNIITIAVFYALPVMQLV) traverse the membrane as a helical segment. The Extracellular segment spans residues 464–494 (ITYQTVVNVTGNQDICYYNFLCAHPLGVLSA). An N-linked (GlcNAc...) asparagine glycan is attached at Asn-471. Residues 495-515 (FNNILSNLGHVLLGFLFLLIV) form a helical membrane-spanning segment. Topologically, residues 516–541 (LRRDLLHRRALEAKDIFAMEYGIPKH) are cytoplasmic. Residues 542–562 (FGLFYAMGIALMMEGVLSACY) traverse the membrane as a helical segment. Topologically, residues 563 to 572 (HVCPNYSNFQ) are extracellular. N-linked (GlcNAc...) asparagine glycosylation occurs at Asn-567. The helical transmembrane segment at 573–590 (FDTSFMYMIAGLCMLKLY) threads the bilayer. The Cytoplasmic portion of the chain corresponds to 591-600 (QTRHPDINAS). A helical transmembrane segment spans residues 601 to 621 (AYSAYASFAVVITLTVLGVVF). The Extracellular segment spans residues 622–626 (GKNDV). Residues 627 to 647 (WFWIIFSAIHILSSLALSTQI) form a helical membrane-spanning segment. The Cytoplasmic segment spans residues 648–683 (YYMGRFKIDLGIFRRAAMVFYTDCIQQCSRPLYMDR). Residues 684–704 (MVLLIVGNLVNWSFAFFGLIY) form a helical membrane-spanning segment. At 705–710 (RPRDFA) the chain is on the extracellular side. The helical transmembrane segment at 711–731 (SYMLGIFICNLLLYLAFYIIM) threads the bilayer. The Cytoplasmic segment spans residues 732 to 741 (KLRSSEKVLP). A helical transmembrane segment spans residues 742–762 (LPVFCIAATAVVWAAALYFFF). Over 763 to 791 (QNLSSWEGTPAESREKNRECVLLDFFDDH) the chain is Extracellular. Asn-764 carries an N-linked (GlcNAc...) asparagine glycan. Residues 792–812 (DIWHFLSATALFFSFLVLLTL) form a helical membrane-spanning segment. The Cytoplasmic portion of the chain corresponds to 813 to 827 (DDDLDVVRRDQIPVF).

This sequence belongs to the SID1 family.

It is found in the membrane. In terms of biological role, in vitro binds long double-stranded RNA (dsRNA) (500 and 700 base pairs), but not dsRNA shorter than 300 bp. Not involved in RNA autophagy, a process in which RNA is directly imported into lysosomes in an ATP-dependent manner, and degraded. This chain is SID1 transmembrane family member 1 (Sidt1), found in Mus musculus (Mouse).